The following is a 368-amino-acid chain: Polymerase delta-interacting protein 2 (368 aa).

The N-terminal 51 residues, 1–51 (MAACTARRALAVGSRWWSRSLTGARWPRPLCAAAGAGAFSPASTTTTRRHL), are a transit peptide targeting the mitochondrion. In terms of domain architecture, ApaG spans 235–360 (RETTENIRVT…FSLESNKDEK (126 aa)). Threonine 292 bears the Phosphothreonine mark.

As to quaternary structure, interacts with PCNA and POLD2. Interacts with SSBP1. Interacts with PRIMPOL; leading to enhance DNA polymerase activity of PRIMPOL. Interacts with POLH. Interacts with POLD1; leading to stimulate DNA polymerase activity of POLD1.

The protein localises to the mitochondrion matrix. It is found in the nucleus. Its function is as follows. Involved in DNA damage tolerance by regulating translesion synthesis (TLS) of templates carrying DNA damage lesions such as 8oxoG and abasic sites. May act by stimulating activity of DNA polymerases involved in TLS, such as PRIMPOL and polymerase delta (POLD1). This Homo sapiens (Human) protein is Polymerase delta-interacting protein 2.